Consider the following 196-residue polypeptide: Orotate phosphoribosyltransferase (196 aa).

5-phospho-alpha-D-ribose 1-diphosphate contacts are provided by residues R102, K103, K106, H108, and 129–137 (EDVVTTGGS). Residues T133 and R161 each contribute to the orotate site.

The protein belongs to the purine/pyrimidine phosphoribosyltransferase family. PyrE subfamily. Homodimer. Mg(2+) is required as a cofactor.

It carries out the reaction orotidine 5'-phosphate + diphosphate = orotate + 5-phospho-alpha-D-ribose 1-diphosphate. Its pathway is pyrimidine metabolism; UMP biosynthesis via de novo pathway; UMP from orotate: step 1/2. Catalyzes the transfer of a ribosyl phosphate group from 5-phosphoribose 1-diphosphate to orotate, leading to the formation of orotidine monophosphate (OMP). This Prochlorococcus marinus (strain MIT 9303) protein is Orotate phosphoribosyltransferase.